Reading from the N-terminus, the 423-residue chain is Glutamate-1-semialdehyde 2,1-aminomutase (423 aa).

K262 bears the N6-(pyridoxal phosphate)lysine mark.

This sequence belongs to the class-III pyridoxal-phosphate-dependent aminotransferase family. HemL subfamily. In terms of assembly, homodimer. It depends on pyridoxal 5'-phosphate as a cofactor.

The protein localises to the cytoplasm. The catalysed reaction is (S)-4-amino-5-oxopentanoate = 5-aminolevulinate. It functions in the pathway porphyrin-containing compound metabolism; protoporphyrin-IX biosynthesis; 5-aminolevulinate from L-glutamyl-tRNA(Glu): step 2/2. In Saccharophagus degradans (strain 2-40 / ATCC 43961 / DSM 17024), this protein is Glutamate-1-semialdehyde 2,1-aminomutase.